The sequence spans 373 residues: MTDNSKTRVVVGMSGGVDSSVTALLLKEQGYDVIGVFMKNWDDTDEFGVCTATEDYKDVAAVADQIDIPYYSVNFEKEYWDRVFEYFLAEYRAGRTPNPDVMCNKEIKFKAFLDYAMTLGADYVATGHYAQVVRDEDGIVHMLRGADNNKDQTYFLSQLSQEQLQKTMFPLGHLQKPEVREIAERAGLATAKKKDSTGICFIGEKNFKEFLSQYLPAQKGRMMTIDGRDMGEHNGLMYYTIGQRGGMGIGGQKGGDNAPWFVVGKDLSKNILYVGQGFHHESLMSTSLDASMIHFTRDMPEEFEMECTAKFRYRQPDSKVTVKVKGDKSEVIFAEPQRAITPGQAVVFYDGQECLGGGIIDQAYKDGKVCQYI.

ATP is bound by residues 12-19 (GMSGGVDS) and methionine 38. The segment at 98–100 (NPD) is interaction with target base in tRNA. Cysteine 103 serves as the catalytic Nucleophile. Cysteine 103 and cysteine 200 are disulfide-bonded. Glycine 127 is an ATP binding site. Residues 150–152 (KDQ) form an interaction with tRNA region. The active-site Cysteine persulfide intermediate is the cysteine 200. Residues 312–313 (RY) form an interaction with tRNA region.

The protein belongs to the MnmA/TRMU family.

The protein resides in the cytoplasm. The catalysed reaction is S-sulfanyl-L-cysteinyl-[protein] + uridine(34) in tRNA + AH2 + ATP = 2-thiouridine(34) in tRNA + L-cysteinyl-[protein] + A + AMP + diphosphate + H(+). Its function is as follows. Catalyzes the 2-thiolation of uridine at the wobble position (U34) of tRNA, leading to the formation of s(2)U34. The polypeptide is tRNA-specific 2-thiouridylase MnmA (Streptococcus thermophilus (strain CNRZ 1066)).